A 475-amino-acid polypeptide reads, in one-letter code: ESX-3 secretion system protein EccD3 (475 aa).

The next 11 helical transmembrane spans lie at 132-152 (IARG…GLSV), 161-181 (LLGQ…ALAV), 186-206 (AVLA…AFAL), 212-232 (FGAP…LISM), 241-261 (IAVF…AGAA), 264-284 (WVIS…IVTV), 333-353 (GVIA…VSSA), 354-374 (NASP…ALRA), 384-404 (AWLL…FVIG), 409-429 (AALW…VAAL), and 453-473 (GLDA…SLVL).

It belongs to the EccD/Snm4 family. Part of the ESX-3 / type VII secretion system (T7SS), which is composed of cytosolic and membrane components. The ESX-3 membrane complex is composed of EccB3, EccC3, EccD3 and EccE3.

The protein resides in the cell inner membrane. In terms of biological role, part of the ESX-3 specialized secretion system, which is required for siderophore-mediated iron acquisition and for the secretion of EsxH and EsxG. This chain is ESX-3 secretion system protein EccD3, found in Mycolicibacterium smegmatis (strain ATCC 700084 / mc(2)155) (Mycobacterium smegmatis).